The chain runs to 560 residues: Membrane protein insertase YidC (560 aa).

A helical transmembrane segment spans residues 1–21 (MDIKRTILIAALAVVSYVMVL). Residues 42-66 (VAPGLPDGVPAGNNGASADVPSANA) are disordered. Helical transmembrane passes span 341 to 361 (LELT…FWLL), 367 to 387 (LLGN…GLFF), 437 to 457 (LGGC…YWVL), 468 to 488 (WILW…PIIM), and 515 to 535 (PIIF…YWVV).

It belongs to the OXA1/ALB3/YidC family. Type 1 subfamily. As to quaternary structure, interacts with the Sec translocase complex via SecD. Specifically interacts with transmembrane segments of nascent integral membrane proteins during membrane integration.

It is found in the cell inner membrane. Functionally, required for the insertion and/or proper folding and/or complex formation of integral membrane proteins into the membrane. Involved in integration of membrane proteins that insert both dependently and independently of the Sec translocase complex, as well as at least some lipoproteins. Aids folding of multispanning membrane proteins. This Pseudomonas putida (strain ATCC 700007 / DSM 6899 / JCM 31910 / BCRC 17059 / LMG 24140 / F1) protein is Membrane protein insertase YidC.